Here is an 815-residue protein sequence, read N- to C-terminus: uncharacterized protein (815 aa).

The first 21 residues, 1 to 21, serve as a signal peptide directing secretion; sequence MNIYRLSFVSCLVMAMPCAMA. An intrachain disulfide couples cysteine 795 to cysteine 814.

This sequence belongs to the fimbrial export usher family.

It localises to the cell outer membrane. Its function is as follows. Could be involved in the export and assembly of the putative YbgD fimbrial subunit across the outer membrane. This is an uncharacterized protein from Escherichia coli (strain K12).